Consider the following 71-residue polypeptide: Antitoxin VapB26 (71 aa).

Its function is as follows. Antitoxin component of a type II toxin-antitoxin (TA) system. Upon expression in M.smegmatis neutralizes the effect of cognate toxin VapC26. This chain is Antitoxin VapB26 (vapB26), found in Mycobacterium tuberculosis (strain ATCC 25618 / H37Rv).